The chain runs to 988 residues: Protein SEMI-ROLLED LEAF 2 (988 aa).

The segment at 844 to 865 (SVDGGLHESPITNTGSSISKTT) is disordered. Residues 853–865 (PITNTGSSISKTT) show a composition bias toward polar residues.

In terms of tissue distribution, expressed in root tips, and in the vascular bundles of leaf blades, leaf sheaths, and roots, especially in their sclerenchymatous cells.

The protein resides in the nucleus. It is found in the cytoplasm. In terms of biological role, functions in regulating leaf rolling through abaxial side leaf cell differentiation. May be involved in the transdifferentiation process from mesophyll cells to sclerenchymatous cells. This is Protein SEMI-ROLLED LEAF 2 from Oryza sativa subsp. japonica (Rice).